The primary structure comprises 508 residues: Serine/threonine-protein kinase VRK2 (508 aa).

A Protein kinase domain is found at 29–319 (WVLGKKIGSG…KKILNPHGIP (291 aa)). ATP is bound by residues 35-43 (IGSGGFGLI) and Lys61. Asp166 (proton acceptor) is an active-site residue. Thr336 bears the Phosphothreonine mark. Positions 397 to 508 (TRRRQKYQES…MLVFLALFFL (112 aa)) are interaction with MAP3K7. Residue Ser406 is modified to Phosphoserine. Residues 487-507 (VYYYRIIIPVLLMLVFLALFF) traverse the membrane as a helical; Anchor for type IV membrane protein segment.

Belongs to the protein kinase superfamily. CK1 Ser/Thr protein kinase family. VRK subfamily. In terms of assembly, isoform 1 interacts with MAP3K7, MAP2K7, MAP2K1 and KSR1. Isoform 1 and isoform 2 interact with RAN and MAPK8IP1. As to quaternary structure, (Microbial infection) Isoform 1 interacts with Epstein-Barr virus BHRF1; this interaction is involved in protecting cells from apoptosis. (Microbial infection) Isoform 1 interacts with vaccinia protein B12. Post-translationally, autophosphorylated. As to expression, isoform 1 and isoform 2 are expressed in various tumor cell lines. Expression of isoform 1 inversely correlates with ERBB2 in breast carcinomas (at protein level). Widely expressed. Highly expressed in fetal liver, skeletal muscle, pancreas, heart, peripheral blood leukocytes and testis.

It is found in the cytoplasm. It localises to the endoplasmic reticulum membrane. The protein resides in the mitochondrion membrane. The protein localises to the nucleus envelope. Its subcellular location is the nucleus. The catalysed reaction is L-seryl-[protein] + ATP = O-phospho-L-seryl-[protein] + ADP + H(+). It carries out the reaction L-threonyl-[protein] + ATP = O-phospho-L-threonyl-[protein] + ADP + H(+). RAN inhibits its autophosphorylation and its ability to phosphorylate histone H3. Its function is as follows. Serine/threonine kinase that regulates several signal transduction pathways. Isoform 1 modulates the stress response to hypoxia and cytokines, such as interleukin-1 beta (IL1B) and this is dependent on its interaction with MAPK8IP1, which assembles mitogen-activated protein kinase (MAPK) complexes. Inhibition of signal transmission mediated by the assembly of MAPK8IP1-MAPK complexes reduces JNK phosphorylation and JUN-dependent transcription. Phosphorylates 'Thr-18' of p53/TP53, histone H3, and may also phosphorylate MAPK8IP1. Phosphorylates BANF1 and disrupts its ability to bind DNA and reduces its binding to LEM domain-containing proteins. Down-regulates the transactivation of transcription induced by ERBB2, HRAS, BRAF, and MEK1. Blocks the phosphorylation of ERK in response to ERBB2 and HRAS. Can also phosphorylate the following substrates that are commonly used to establish in vitro kinase activity: casein, MBP and histone H2B, but it is not sure that this is physiologically relevant. Phosphorylates 'Thr-18' of p53/TP53, as well as histone H3. Reduces p53/TP53 ubiquitination by MDM2, promotes p53/TP53 acetylation by EP300 and thereby increases p53/TP53 stability and activity. This Homo sapiens (Human) protein is Serine/threonine-protein kinase VRK2 (VRK2).